A 71-amino-acid chain; its full sequence is Glucose-repressible gene protein (71 aa).

Residues 19–71 (TATASKEANKDVAKDSNQGVGTRLNAAGDAISDKVSENKHDAKAEAHKQGATH) are disordered. A compositionally biased stretch (basic and acidic residues) spans 49 to 71 (ISDKVSENKHDAKAEAHKQGATH).

The chain is Glucose-repressible gene protein (grg-1) from Neurospora crassa (strain ATCC 24698 / 74-OR23-1A / CBS 708.71 / DSM 1257 / FGSC 987).